A 367-amino-acid chain; its full sequence is tRNA/tmRNA (uracil-C(5))-methyltransferase (367 aa).

S-adenosyl-L-methionine contacts are provided by glutamine 190, tyrosine 218, asparagine 223, glutamate 239, and aspartate 299. The Nucleophile role is filled by cysteine 324. Glutamate 358 serves as the catalytic Proton acceptor.

This sequence belongs to the class I-like SAM-binding methyltransferase superfamily. RNA M5U methyltransferase family. TrmA subfamily.

The enzyme catalyses uridine(54) in tRNA + S-adenosyl-L-methionine = 5-methyluridine(54) in tRNA + S-adenosyl-L-homocysteine + H(+). It carries out the reaction uridine(341) in tmRNA + S-adenosyl-L-methionine = 5-methyluridine(341) in tmRNA + S-adenosyl-L-homocysteine + H(+). Dual-specificity methyltransferase that catalyzes the formation of 5-methyluridine at position 54 (m5U54) in all tRNAs, and that of position 341 (m5U341) in tmRNA (transfer-mRNA). The chain is tRNA/tmRNA (uracil-C(5))-methyltransferase from Pectobacterium atrosepticum (strain SCRI 1043 / ATCC BAA-672) (Erwinia carotovora subsp. atroseptica).